Consider the following 258-residue polypeptide: Synapse differentiation-inducing gene protein 1 (258 aa).

Topologically, residues 1 to 181 (MDGIIEQKSV…NFLMMPPRDH (181 aa)) are cytoplasmic. Ser-137 bears the Phosphoserine mark. A helical membrane pass occupies residues 182–202 (LGLSVFSMLCCFWPLGIAAFY). Residues 203–228 (LSHETNKAVAKGDFHQASTSSRRALF) lie on the Extracellular side of the membrane. Positions 229-249 (LAVLSITIGTGIYVGVAVALI) form an intramembrane region, helical. At 250-258 (AYLSKNNHL) the chain is on the extracellular side.

This sequence belongs to the CD225/Dispanin family. In terms of assembly, homodimer. Interacts with GRIA1 and GRIA2. Brain-specific. Expressed in Purkinje neurons in cerebellum. Also detected in the hippocampus. Found at excitatory synapses and postsynaptic cells.

It localises to the cell membrane. Its subcellular location is the early endosome membrane. The protein resides in the postsynaptic density membrane. It is found in the synapse. The protein localises to the cell projection. It localises to the dendrite. Its subcellular location is the dendritic spine. Its function is as follows. May regulate AMPA receptor content at nascent synapses, and have a role in postsynaptic development and maturation. The chain is Synapse differentiation-inducing gene protein 1 (Syndig1) from Mus musculus (Mouse).